The sequence spans 60 residues: Small ribosomal subunit protein bS21 (60 aa).

The tract at residues 41–60 (PEEKRKRKAIARRRQRSRRR) is disordered. A compositionally biased stretch (basic residues) spans 45-60 (RKRKAIARRRQRSRRR).

The protein belongs to the bacterial ribosomal protein bS21 family.

In Gloeothece citriformis (strain PCC 7424) (Cyanothece sp. (strain PCC 7424)), this protein is Small ribosomal subunit protein bS21.